Here is a 526-residue protein sequence, read N- to C-terminus: GMP synthase [glutamine-hydrolyzing] (526 aa).

The 201-residue stretch at 4-204 (KIVVLDFGSQ…AHAICGCSGD (201 aa)) folds into the Glutamine amidotransferase type-1 domain. Cysteine 87 serves as the catalytic Nucleophile. Residues histidine 178 and glutamate 180 contribute to the active site. The GMPS ATP-PPase domain maps to 205–401 (WTPASFVEEQ…LDVPDPIVGR (197 aa)). Residue 232–238 (SGGVDSS) participates in ATP binding.

In terms of assembly, homodimer.

The enzyme catalyses XMP + L-glutamine + ATP + H2O = GMP + L-glutamate + AMP + diphosphate + 2 H(+). It functions in the pathway purine metabolism; GMP biosynthesis; GMP from XMP (L-Gln route): step 1/1. Functionally, catalyzes the synthesis of GMP from XMP. This is GMP synthase [glutamine-hydrolyzing] from Salinibacter ruber (strain DSM 13855 / M31).